A 733-amino-acid chain; its full sequence is Alpha,alpha-trehalose-phosphate synthase [UDP-forming] A (733 aa).

This sequence in the N-terminal section; belongs to the glycosyltransferase 20 family. In the C-terminal section; belongs to the trehalose phosphatase family.

The enzyme catalyses D-glucose 6-phosphate + UDP-alpha-D-glucose = alpha,alpha-trehalose 6-phosphate + UDP + H(+). In terms of biological role, synthesizes trehalose 6-phosphate, the precursor for the production of trehalose, the main carbohydrate storage reserve of the dormant spore. Trehalose accumulates in both prestalk and prespore cells and then is rapidly metabolized during terminal differentiation of stalk cells, while being stored in spores, where it serves as the principal energy and carbon source for germination. The polypeptide is Alpha,alpha-trehalose-phosphate synthase [UDP-forming] A (tpsA) (Dictyostelium discoideum (Social amoeba)).